The primary structure comprises 293 residues: MSGVDQIVKTFADLAEDDREAAMRAFSRMMRRGTEPVRRIPAAKKKVNGFMGFRSYYSPLFSQLPQKERSPFMTILWQHDPFHNEWDFMCSVYSSIRTYLEQEKVTLQLWIHYAVGHLGVIIRDNYMASFGWNLVRFPNGTHDLERTALPLVQHNLQPMNGLCLLTKCLESGLPLANPHSVIAKLSDPSYDMIWFNKRPHRQQGHAVQTDESEVGVSAMFPRNHTVAAEVDGIINLPLSHWIQQGEFGTESGYSAQFETLLDSILENGHASSNDPYNMALAIDVPMMGFNGGA.

Positions 42–97 form a DNA-binding region, alpha box; that stretch reads AAKKKVNGFMGFRSYYSPLFSQLPQKERSPFMTILWQHDPFHNEWDFMCSVYSSIR.

The protein belongs to the MATALPHA1 family.

The protein localises to the nucleus. In terms of biological role, mating type proteins are sequence specific DNA-binding proteins that act as master switches in yeast differentiation by controlling gene expression in a cell type-specific fashion. Transcriptional activator that induces the transcription of A-specific genes like mating factor ccg-4. Required for mating as an A-cell and for blocking of heterokaryon formation (vegetative incompatibility). The sequence is that of Mating-type protein A-1 (mtA-1) from Neurospora crassa (strain ATCC 24698 / 74-OR23-1A / CBS 708.71 / DSM 1257 / FGSC 987).